A 286-amino-acid chain; its full sequence is tRNA(Ile)-lysidine synthase (286 aa).

7-12 (SGGPDS) is an ATP binding site.

Belongs to the tRNA(Ile)-lysidine synthase family.

The protein resides in the cytoplasm. The enzyme catalyses cytidine(34) in tRNA(Ile2) + L-lysine + ATP = lysidine(34) in tRNA(Ile2) + AMP + diphosphate + H(+). Its function is as follows. Ligates lysine onto the cytidine present at position 34 of the AUA codon-specific tRNA(Ile) that contains the anticodon CAU, in an ATP-dependent manner. Cytidine is converted to lysidine, thus changing the amino acid specificity of the tRNA from methionine to isoleucine. This chain is tRNA(Ile)-lysidine synthase, found in Mycoplasmopsis pulmonis (strain UAB CTIP) (Mycoplasma pulmonis).